Reading from the N-terminus, the 96-residue chain is Citrate lyase acyl carrier protein (96 aa).

Ser14 carries the post-translational modification O-(phosphoribosyl dephospho-coenzyme A)serine.

The protein belongs to the CitD family. As to quaternary structure, oligomer with a subunit composition of (alpha,beta,gamma)6.

It is found in the cytoplasm. Its function is as follows. Covalent carrier of the coenzyme of citrate lyase. This is Citrate lyase acyl carrier protein from Pectobacterium carotovorum subsp. carotovorum (strain PC1).